Consider the following 95-residue polypeptide: Putative defensin-like protein 262 (95 aa).

An N-terminal signal peptide occupies residues 1–26; sequence MEKTSLKLIFLFSLTVIAFCSSLGDA. 4 disulfides stabilise this stretch: C48–C95, C64–C83, C70–C91, and C74–C93.

The protein belongs to the DEFL family.

It is found in the secreted. The sequence is that of Putative defensin-like protein 262 from Arabidopsis thaliana (Mouse-ear cress).